An 881-amino-acid polypeptide reads, in one-letter code: Valine--tRNA ligase (881 aa).

Residues 49–59 carry the 'HIGH' region motif; sequence PNVTGKLHLGH. The 'KMSKS' region signature appears at 526-530; sequence KMSKS. Lys-529 provides a ligand contact to ATP. Residues 810-881 adopt a coiled-coil conformation; that stretch reads LADLINLDEE…VRQRLADLEK (72 aa).

It belongs to the class-I aminoacyl-tRNA synthetase family. ValS type 1 subfamily. As to quaternary structure, monomer.

It is found in the cytoplasm. It carries out the reaction tRNA(Val) + L-valine + ATP = L-valyl-tRNA(Val) + AMP + diphosphate. Catalyzes the attachment of valine to tRNA(Val). As ValRS can inadvertently accommodate and process structurally similar amino acids such as threonine, to avoid such errors, it has a 'posttransfer' editing activity that hydrolyzes mischarged Thr-tRNA(Val) in a tRNA-dependent manner. In Bacillus cereus (strain ATCC 14579 / DSM 31 / CCUG 7414 / JCM 2152 / NBRC 15305 / NCIMB 9373 / NCTC 2599 / NRRL B-3711), this protein is Valine--tRNA ligase.